Here is a 349-residue protein sequence, read N- to C-terminus: MELAVGNLSEGNASWPEPPAPEPGPLFGIGVENFVTLVVFGLIFALGVLGNSLVITVLARSKPGKPRSTTNLFILNLSIADLAYLLFCIPFQATVYALPTWVLGAFICKFIHYFFTVSMLVSIFTLAAMSVDRYVAIVHSRRSSSLRVSRNALLGVGCIWALSIAMASPVAYHQGLFHPRASNQTFCWEQWPDPRHKKAYVVCTFVFGYLLPLLLICFCYAKVLNHLHKKLKNMSKKSEASKKKTAQTVLVVVVVFGISWLPHHIIHLWAEFGVFPLTPASFLFRITAHCLAYSNSSVNPIIYAFLSENFRKAYKQVFKCHIRKDSHLSDTKESKSRIDTPPSTNCTHV.

Topologically, residues 1-36 are extracellular; the sequence is MELAVGNLSEGNASWPEPPAPEPGPLFGIGVENFVT. 2 N-linked (GlcNAc...) asparagine glycosylation sites follow: N7 and N12. A helical transmembrane segment spans residues 37 to 57; that stretch reads LVVFGLIFALGVLGNSLVITV. The Cytoplasmic portion of the chain corresponds to 58–70; the sequence is LARSKPGKPRSTT. Residues 71–91 traverse the membrane as a helical segment; it reads NLFILNLSIADLAYLLFCIPF. Residues 92-109 are Extracellular-facing; the sequence is QATVYALPTWVLGAFICK. Cysteines 108 and 187 form a disulfide. The helical transmembrane segment at 110-131 threads the bilayer; sequence FIHYFFTVSMLVSIFTLAAMSV. The Cytoplasmic segment spans residues 132–151; that stretch reads DRYVAIVHSRRSSSLRVSRN. Residues 152–172 traverse the membrane as a helical segment; it reads ALLGVGCIWALSIAMASPVAY. At 173 to 200 the chain is on the extracellular side; that stretch reads HQGLFHPRASNQTFCWEQWPDPRHKKAY. N-linked (GlcNAc...) asparagine glycosylation occurs at N183. A helical transmembrane segment spans residues 201 to 221; the sequence is VVCTFVFGYLLPLLLICFCYA. Residues 222-248 lie on the Cytoplasmic side of the membrane; it reads KVLNHLHKKLKNMSKKSEASKKKTAQT. A helical transmembrane segment spans residues 249-269; that stretch reads VLVVVVVFGISWLPHHIIHLW. Over 270 to 271 the chain is Extracellular; that stretch reads AE. The helical transmembrane segment at 272-292 threads the bilayer; the sequence is FGVFPLTPASFLFRITAHCLA. At 293–349 the chain is on the cytoplasmic side; the sequence is YSNSSVNPIIYAFLSENFRKAYKQVFKCHIRKDSHLSDTKESKSRIDTPPSTNCTHV. C320 carries S-palmitoyl cysteine lipidation.

The protein belongs to the G-protein coupled receptor 1 family. As to quaternary structure, interacts with GRP39 AND HTR1A. Palmitoylated on at least one of the three cysteine residues present in the C-terminal part.

It localises to the cell membrane. Receptor for the hormone galanin. The activity of this receptor is mediated by G proteins that inhibit adenylate cyclase activity. The chain is Galanin receptor type 1 (GALR1) from Homo sapiens (Human).